Consider the following 456-residue polypeptide: Histidine--tRNA ligase (456 aa).

This sequence belongs to the class-II aminoacyl-tRNA synthetase family. In terms of assembly, homodimer.

Its subcellular location is the cytoplasm. It catalyses the reaction tRNA(His) + L-histidine + ATP = L-histidyl-tRNA(His) + AMP + diphosphate + H(+). The protein is Histidine--tRNA ligase (hisS) of Borreliella burgdorferi (strain ATCC 35210 / DSM 4680 / CIP 102532 / B31) (Borrelia burgdorferi).